A 640-amino-acid chain; its full sequence is Threonine--tRNA ligase (640 aa).

The TGS domain occupies Met-1–Thr-59. Residues Asp-240–Pro-531 are catalytic. 3 residues coordinate Zn(2+): Cys-332, His-383, and His-508.

The protein belongs to the class-II aminoacyl-tRNA synthetase family. In terms of assembly, homodimer. Requires Zn(2+) as cofactor.

Its subcellular location is the cytoplasm. The enzyme catalyses tRNA(Thr) + L-threonine + ATP = L-threonyl-tRNA(Thr) + AMP + diphosphate + H(+). Functionally, catalyzes the attachment of threonine to tRNA(Thr) in a two-step reaction: L-threonine is first activated by ATP to form Thr-AMP and then transferred to the acceptor end of tRNA(Thr). Also edits incorrectly charged L-seryl-tRNA(Thr). This chain is Threonine--tRNA ligase, found in Thermotoga petrophila (strain ATCC BAA-488 / DSM 13995 / JCM 10881 / RKU-1).